The following is a 500-amino-acid chain: Lysine--tRNA ligase (500 aa).

Residues Glu-411 and Glu-418 each contribute to the Mg(2+) site.

This sequence belongs to the class-II aminoacyl-tRNA synthetase family. Homodimer. Requires Mg(2+) as cofactor.

The protein localises to the cytoplasm. The catalysed reaction is tRNA(Lys) + L-lysine + ATP = L-lysyl-tRNA(Lys) + AMP + diphosphate. This chain is Lysine--tRNA ligase, found in Actinobacillus pleuropneumoniae serotype 7 (strain AP76).